The following is a 401-amino-acid chain: Succinyl-diaminopimelate desuccinylase (401 aa).

H82 contributes to the Zn(2+) binding site. D84 is an active-site residue. Position 115 (D115) interacts with Zn(2+). E149 functions as the Proton acceptor in the catalytic mechanism. 3 residues coordinate Zn(2+): E150, E178, and H364.

Belongs to the peptidase M20A family. DapE subfamily. Homodimer. Requires Zn(2+) as cofactor. Co(2+) is required as a cofactor.

The catalysed reaction is N-succinyl-(2S,6S)-2,6-diaminopimelate + H2O = (2S,6S)-2,6-diaminopimelate + succinate. It functions in the pathway amino-acid biosynthesis; L-lysine biosynthesis via DAP pathway; LL-2,6-diaminopimelate from (S)-tetrahydrodipicolinate (succinylase route): step 3/3. In terms of biological role, catalyzes the hydrolysis of N-succinyl-L,L-diaminopimelic acid (SDAP), forming succinate and LL-2,6-diaminopimelate (DAP), an intermediate involved in the bacterial biosynthesis of lysine and meso-diaminopimelic acid, an essential component of bacterial cell walls. In Verminephrobacter eiseniae (strain EF01-2), this protein is Succinyl-diaminopimelate desuccinylase.